A 50-amino-acid polypeptide reads, in one-letter code: Ornatin-E (50 aa).

The Cell attachment site signature appears at Arg42 to Asp44.

This sequence belongs to the ornatin family.

The protein localises to the secreted. Potent inhibitor of fibrinogen interaction with platelet receptors expressed on glycoprotein IIb-IIIa complex. May prevent blood from clotting during either feeding and/or storage of ingested blood. The polypeptide is Ornatin-E (Placobdella ornata (Turtle leech)).